Reading from the N-terminus, the 332-residue chain is L-lactate dehydrogenase A chain (332 aa).

NAD(+) contacts are provided by residues 29–57 and R99; that span reads GAVG…VEDK. Substrate-binding residues include R106, N138, and R169. NAD(+) is bound at residue N138. Catalysis depends on H193, which acts as the Proton acceptor. Position 248 (T248) interacts with substrate.

Belongs to the LDH/MDH superfamily. LDH family. In terms of assembly, homotetramer.

It is found in the cytoplasm. The catalysed reaction is (S)-lactate + NAD(+) = pyruvate + NADH + H(+). The protein operates within fermentation; pyruvate fermentation to lactate; (S)-lactate from pyruvate: step 1/1. Its function is as follows. Interconverts simultaneously and stereospecifically pyruvate and lactate with concomitant interconversion of NADH and NAD(+). The protein is L-lactate dehydrogenase A chain (LDHA) of Python regius (Ball python).